A 709-amino-acid polypeptide reads, in one-letter code: Protein transport protein SEC39 (709 aa).

This sequence belongs to the SEC39 family. In terms of assembly, component of a peripheral membrane protein complex consisting of DSL1, SEC39/DSL3 and TIP20. Bound to a SNARE complex consisting of UFE1, USE1, SEC20 and SEC22 or YKT6 through direct interaction of TIP20 with SEC20. Interacts with TIP20 and DSL1.

It localises to the endoplasmic reticulum membrane. Required for protein transport between the Golgi and the endoplasmic reticulum. May contribute to tethering of coatomer-coated retrograde transport vesicles to the ER membrane through interaction with and stabilization of the SNARE complex. This is Protein transport protein SEC39 from Saccharomyces cerevisiae (strain ATCC 204508 / S288c) (Baker's yeast).